Reading from the N-terminus, the 172-residue chain is Adenine phosphoribosyltransferase (172 aa).

The protein belongs to the purine/pyrimidine phosphoribosyltransferase family. In terms of assembly, homodimer.

Its subcellular location is the cytoplasm. The enzyme catalyses AMP + diphosphate = 5-phospho-alpha-D-ribose 1-diphosphate + adenine. The protein operates within purine metabolism; AMP biosynthesis via salvage pathway; AMP from adenine: step 1/1. Catalyzes a salvage reaction resulting in the formation of AMP, that is energically less costly than de novo synthesis. This chain is Adenine phosphoribosyltransferase, found in Anaeromyxobacter dehalogenans (strain 2CP-1 / ATCC BAA-258).